The chain runs to 144 residues: DNA-directed RNA polymerases II and V subunit 6B (144 aa).

The span at 1–32 (MADDDYNEVDDLGYEDEPAEPEIEEGVEEDAD) shows a compositional bias: acidic residues. The interval 1-62 (MADDDYNEVD…EPVQRPRKTS (62 aa)) is disordered. The span at 46–56 (TEDKVETEPVQ) shows a compositional bias: basic and acidic residues.

Belongs to the archaeal Rpo6/eukaryotic RPB6 RNA polymerase subunit family. Component of the RNA polymerase II and V complexes.

It is found in the nucleus. Its function is as follows. DNA-dependent RNA polymerase catalyzes the transcription of DNA into RNA using the four ribonucleoside triphosphates as substrates. Component of RNA polymerase II which synthesizes mRNA precursors and many functional non-coding RNAs. Pol II is the central component of the basal RNA polymerase II transcription machinery. It is composed of mobile elements that move relative to each other. Component of RNA polymerase V which mediates RNA-directed DNA methylation-dependent (RdDM) transcriptional gene silencing (TGS) of endogenous repeated sequences, including transposable elements. This chain is DNA-directed RNA polymerases II and V subunit 6B (NRPB6B), found in Arabidopsis thaliana (Mouse-ear cress).